The primary structure comprises 321 residues: S-methyl-5'-thioadenosine phosphorylase (321 aa).

Residues threonine 30, 73–74 (RH), and 106–107 (SA) each bind phosphate. Residue methionine 215 coordinates substrate. Serine 216 contributes to the phosphate binding site. 239–241 (DYD) contributes to the substrate binding site.

It belongs to the PNP/MTAP phosphorylase family. MTAP subfamily. Homotrimer.

It is found in the cytoplasm. The protein resides in the nucleus. It catalyses the reaction S-methyl-5'-thioadenosine + phosphate = 5-(methylsulfanyl)-alpha-D-ribose 1-phosphate + adenine. It participates in amino-acid biosynthesis; L-methionine biosynthesis via salvage pathway; S-methyl-5-thio-alpha-D-ribose 1-phosphate from S-methyl-5'-thioadenosine (phosphorylase route): step 1/1. In terms of biological role, catalyzes the reversible phosphorylation of S-methyl-5'-thioadenosine (MTA) to adenine and 5-methylthioribose-1-phosphate. Involved in the breakdown of MTA, a major by-product of polyamine biosynthesis. Responsible for the first step in the methionine salvage pathway after MTA has been generated from S-adenosylmethionine. Has broad substrate specificity with 6-aminopurine nucleosides as preferred substrates. The protein is S-methyl-5'-thioadenosine phosphorylase of Yarrowia lipolytica (strain CLIB 122 / E 150) (Yeast).